Consider the following 433-residue polypeptide: GPI mannosyltransferase 2 (433 aa).

The next 9 helical transmembrane spans lie at 4–24 (LVKP…IISL), 109–129 (TAVI…FYLT), 148–165 (ATFT…GFFT), 172–194 (LSFL…IIPY), 204–226 (FYYT…NCIL), 247–267 (ALLF…RQQF), 322–342 (IPNF…TFYF), 354–374 (LIFI…VQII), and 410–430 (GYIY…VFFL).

Belongs to the PIGV family.

The protein resides in the endoplasmic reticulum membrane. It participates in glycolipid biosynthesis; glycosylphosphatidylinositol-anchor biosynthesis. Functionally, mannosyltransferase involved in glycosylphosphatidylinositol-anchor biosynthesis. Transfers the second mannose to the glycosylphosphatidylinositol during GPI precursor assembly. The protein is GPI mannosyltransferase 2 (GPI18) of Candida glabrata (strain ATCC 2001 / BCRC 20586 / JCM 3761 / NBRC 0622 / NRRL Y-65 / CBS 138) (Yeast).